Here is a 335-residue protein sequence, read N- to C-terminus: Holliday junction branch migration complex subunit RuvB (335 aa).

Residues 1 to 183 (MDERIISSET…FGVIDHLEFY (183 aa)) form a large ATPase domain (RuvB-L) region. ATP contacts are provided by residues Leu-22, Arg-23, Gly-64, Lys-67, Thr-68, Thr-69, 130-132 (EDY), Arg-173, Tyr-183, and Arg-220. Thr-68 is a Mg(2+) binding site. The small ATPAse domain (RuvB-S) stretch occupies residues 184–254 (TEEQLTEIVL…LAKEALTLLQ (71 aa)). Positions 257–335 (PRGLDTIDQK…HLGISYEKEV (79 aa)) are head domain (RuvB-H). DNA-binding residues include Arg-293, Arg-312, and Arg-317.

It belongs to the RuvB family. Homohexamer. Forms an RuvA(8)-RuvB(12)-Holliday junction (HJ) complex. HJ DNA is sandwiched between 2 RuvA tetramers; dsDNA enters through RuvA and exits via RuvB. An RuvB hexamer assembles on each DNA strand where it exits the tetramer. Each RuvB hexamer is contacted by two RuvA subunits (via domain III) on 2 adjacent RuvB subunits; this complex drives branch migration. In the full resolvosome a probable DNA-RuvA(4)-RuvB(12)-RuvC(2) complex forms which resolves the HJ.

It is found in the cytoplasm. The enzyme catalyses ATP + H2O = ADP + phosphate + H(+). In terms of biological role, the RuvA-RuvB-RuvC complex processes Holliday junction (HJ) DNA during genetic recombination and DNA repair, while the RuvA-RuvB complex plays an important role in the rescue of blocked DNA replication forks via replication fork reversal (RFR). RuvA specifically binds to HJ cruciform DNA, conferring on it an open structure. The RuvB hexamer acts as an ATP-dependent pump, pulling dsDNA into and through the RuvAB complex. RuvB forms 2 homohexamers on either side of HJ DNA bound by 1 or 2 RuvA tetramers; 4 subunits per hexamer contact DNA at a time. Coordinated motions by a converter formed by DNA-disengaged RuvB subunits stimulates ATP hydrolysis and nucleotide exchange. Immobilization of the converter enables RuvB to convert the ATP-contained energy into a lever motion, pulling 2 nucleotides of DNA out of the RuvA tetramer per ATP hydrolyzed, thus driving DNA branch migration. The RuvB motors rotate together with the DNA substrate, which together with the progressing nucleotide cycle form the mechanistic basis for DNA recombination by continuous HJ branch migration. Branch migration allows RuvC to scan DNA until it finds its consensus sequence, where it cleaves and resolves cruciform DNA. This is Holliday junction branch migration complex subunit RuvB from Listeria monocytogenes serotype 4b (strain CLIP80459).